The primary structure comprises 106 residues: uncharacterized protein (106 aa).

2 helical membrane-spanning segments follow: residues 25 to 45 (VMNV…IHYI) and 62 to 82 (ICFL…NFQG).

It localises to the membrane. This is an uncharacterized protein from Saccharomyces cerevisiae (strain ATCC 204508 / S288c) (Baker's yeast).